The primary structure comprises 66 residues: Large ribosomal subunit protein bL32 (66 aa).

A compositionally biased stretch (basic residues) spans 1-18; it reads MAIVPKRKTSKQRKHKRR. The tract at residues 1–21 is disordered; it reads MAIVPKRKTSKQRKHKRRTND.

The protein belongs to the bacterial ribosomal protein bL32 family.

The polypeptide is Large ribosomal subunit protein bL32 (Mycoplasmopsis agalactiae (strain NCTC 10123 / CIP 59.7 / PG2) (Mycoplasma agalactiae)).